The primary structure comprises 333 residues: Torsin-1A (333 aa).

An N-terminal signal peptide occupies residues 1–20 (MKLGRATLALLLLVPCVVRA). The interaction with SNAPIN stretch occupies residues 92 to 252 (KPKKPLTLSL…VSVFNNKNSG (161 aa)). N-linked (GlcNAc...) asparagine glycans are attached at residues Asn-144 and Asn-159. The interaction with KLC1 stretch occupies residues 252 to 333 (GFWHSSLIDR…FTKLDYYLDD (82 aa)). An interaction with SYNE3 region spans residues 313–333 (KVFSDKGCKTVFTKLDYYLDD).

It belongs to the ClpA/ClpB family. Torsin subfamily. In terms of assembly, homohexamer. Interacts with TOR1B; the interaction may be specific of neural tissues. Interacts (ATP-bound) with TOR1AIP1 and TOR1AIP2; the interactions induce ATPase activity. Interacts with KLHL14; preferentially when ATP-free. Interacts with KLC1 (via TPR repeats); the interaction associates TOR1A with the kinesin oligomeric complex. Interacts with COPS4; the interaction associates TOR1A with the CSN complex. Interacts with SNAPIN; the interaction is direct and associates SNAPIN with the CSN complex. Interacts with STON2. Interacts (ATP-bound) with SYNE3 (via KASH domain); the interaction is required for SYNE3 nuclear envelope localization. Interacts with VIM; the interaction associates TOR1A with the cytoskeleton. Interacts with PLEC. Interacts (ATP-bound) with SLC6A3; regulates SLC6A3 transport to the plasma membrane. Post-translationally, N-glycosylated. In terms of tissue distribution, expressed in brain (at protein level).

It localises to the endoplasmic reticulum lumen. It is found in the nucleus inner membrane. Its subcellular location is the cell projection. The protein resides in the growth cone. The protein localises to the cytoplasmic vesicle membrane. It localises to the cytoplasmic vesicle. It is found in the secretory vesicle. Its subcellular location is the synaptic vesicle. The catalysed reaction is ATP + H2O = ADP + phosphate + H(+). Its function is as follows. Protein with chaperone functions important for the control of protein folding, processing, stability and localization as well as for the reduction of misfolded protein aggregates. Involved in the regulation of synaptic vesicle recycling, controls STON2 protein stability in collaboration with the COP9 signalosome complex (CSN). In the nucleus, may link the cytoskeleton with the nuclear envelope, this mechanism seems to be crucial for the control of nuclear polarity, cell movement and, specifically in neurons, nuclear envelope integrity. Participates in the cellular trafficking and may regulate the subcellular location of multipass membrane proteins such as the dopamine transporter SLC6A3, leading to the modulation of dopamine neurotransmission. In the endoplasmic reticulum, plays a role in the quality control of protein folding by increasing clearance of misfolded proteins such as SGCE variants or holding them in an intermediate state for proper refolding. May have a redundant function with TOR1B in non-neural tissues. In Rattus norvegicus (Rat), this protein is Torsin-1A (Tor1a).